We begin with the raw amino-acid sequence, 85 residues long: UPF0291 protein SPCG_1462 (85 aa).

A disordered region spans residues 62–85; it reads TPEKLRQVQREKGLHGRSLDDPNS.

This sequence belongs to the UPF0291 family.

It localises to the cytoplasm. The polypeptide is UPF0291 protein SPCG_1462 (Streptococcus pneumoniae (strain CGSP14)).